The primary structure comprises 185 residues: Ribosome-recycling factor (185 aa).

Belongs to the RRF family.

The protein localises to the cytoplasm. In terms of biological role, responsible for the release of ribosomes from messenger RNA at the termination of protein biosynthesis. May increase the efficiency of translation by recycling ribosomes from one round of translation to another. The chain is Ribosome-recycling factor from Clostridium botulinum (strain Alaska E43 / Type E3).